Here is a 449-residue protein sequence, read N- to C-terminus: 23S rRNA (uracil(1939)-C(5))-methyltransferase RlmD (449 aa).

One can recognise a TRAM domain in the interval 12–70 (SKQLSAKQSFSVHQLDHLGAGIAQHQGKVVFIPGALPSETVQAQLTEQKKNYARAKLIK). [4Fe-4S] cluster contacts are provided by Cys83, Cys89, Cys92, and Cys170. S-adenosyl-L-methionine is bound by residues Gln282, Phe311, Asn316, Glu332, Asp359, and Asp379. The active-site Nucleophile is Cys405.

The protein belongs to the class I-like SAM-binding methyltransferase superfamily. RNA M5U methyltransferase family. RlmD subfamily.

The catalysed reaction is uridine(1939) in 23S rRNA + S-adenosyl-L-methionine = 5-methyluridine(1939) in 23S rRNA + S-adenosyl-L-homocysteine + H(+). Its function is as follows. Catalyzes the formation of 5-methyl-uridine at position 1939 (m5U1939) in 23S rRNA. In Shewanella sp. (strain MR-7), this protein is 23S rRNA (uracil(1939)-C(5))-methyltransferase RlmD.